The sequence spans 550 residues: Acetyl-coenzyme A transporter 1 (550 aa).

Composition is skewed to basic and acidic residues over residues 1–12 (MSPTISHKDSSR) and 36–52 (DDSRRDSVGGEGDREVL). The segment at 1 to 58 (MSPTISHKDSSRQRRSGMFSHALDMKSGPLPPGGWDDSRRDSVGGEGDREVLLGDAGP) is disordered. Residues 1–74 (MSPTISHKDS…PRSYRSELSS (74 aa)) are Cytoplasmic-facing. A Phosphoserine modification is found at S42. Residues 75 to 95 (ILLLLFLYVLQGIPLGLAGSI) form a helical membrane-spanning segment. Residues 96-113 (PLILQSKNVSYTDQAFFS) are Extracellular-facing. A glycan (N-linked (GlcNAc...) asparagine) is linked at N103. A helical membrane pass occupies residues 114–134 (FVFWPFSLKLLWAPLVDAVYF). Residues 135-141 (KNFGRRK) are Cytoplasmic-facing. Residues 142–162 (SWLVPTQYTLGIFMIYLSTQV) traverse the membrane as a helical segment. Topologically, residues 163–175 (DRLLGNIDGRTPD) are extracellular. A helical membrane pass occupies residues 176–196 (VVALTVTFFLFEFLAATQDIA). The Cytoplasmic segment spans residues 197–217 (VDGWALTMLSRENVGYASTCN). Residues 218 to 238 (SVGQTAGYFLGNVLFLALESA) traverse the membrane as a helical segment. The Extracellular portion of the chain corresponds to 239-256 (DFCNKYLRFQPQPRGIVT). Residues 257–277 (LSDFLFFWGTVFLITTTLVAL) traverse the membrane as a helical segment. At 278-300 (LKKENREASIVKEETQGITDTYK) the chain is on the cytoplasmic side. Residues 301 to 321 (LLFSIIKMPAVLAFCLLILTS) traverse the membrane as a helical segment. Topologically, residues 322–344 (KIGFSAADAVTGLKLVEEGVPKE) are extracellular. A helical transmembrane segment spans residues 345-365 (HLALLAVPMVPLQIILPLLIS). Residues 366-375 (KYTAGPQPLN) lie on the Cytoplasmic side of the membrane. Residues 376 to 396 (IFYKAMPYRLLLGLEYALLVW) form a helical membrane-spanning segment. The Extracellular portion of the chain corresponds to 397-405 (WTPKVEHQG). The chain crosses the membrane as a helical span at residues 406–426 (GFPLYYYIIVLLSYALHQVTL). At 427 to 509 (YSMYVSIMAF…LGGSCVTALD (83 aa)) the chain is on the cytoplasmic side. The chain crosses the membrane as a helical span at residues 510–530 (GYYVESIICVLIGFGWWFFLG). The Extracellular segment spans residues 531–550 (PKFKKLQDEGPSSWKCKRNN).

This sequence belongs to the SLC33A transporter family. As to quaternary structure, homodimerizes. As to expression, expressed in all adult tissues examined including brain, heart, kidney, liver and spleen, with maximum expression in liver and kidney.

It localises to the endoplasmic reticulum membrane. The catalysed reaction is acetyl-CoA(in) = acetyl-CoA(out). Its function is as follows. Acetyl-CoA transporter that mediates active acetyl-CoA import through the endoplasmic reticulum (ER) membrane into the ER lumen where specific ER-based acetyl-CoA:lysine acetyltransferases are responsible for the acetylation of ER-based protein substrate, such as BACE1. Necessary for O-acetylation of gangliosides. The chain is Acetyl-coenzyme A transporter 1 (Slc33a1) from Mus musculus (Mouse).